The chain runs to 459 residues: ERBB receptor feedback inhibitor 1 (459 aa).

Residue Ser2 is modified to N-acetylserine. Phosphothreonine is present on residues Thr126 and Thr130. The segment at 227 to 352 is disordered; it reads QNRVVPDPNP…VMPPTQSFAP (126 aa). Phosphoserine is present on residues Ser250 and Ser271. Positions 264–273 are enriched in polar residues; sequence SSCTHRASPS. Pro residues predominate over residues 282–291; the sequence is PPRVPIPPRP. Ser300 is modified (phosphoserine). Over residues 310–323 the composition is skewed to basic and acidic residues; the sequence is DEDRPPKVPPREPL. Positions 324-335 are enriched in polar residues; sequence SRSNSRTPSPKS. The segment at 332 to 361 is interaction with EGFR and ERBB2 and regulation of EGFR activation; that stretch reads SPKSLPSYLNGVMPPTQSFAPDPKYVSSKA. Position 458 is a phosphoserine (Ser458).

Belongs to the MIG6 family. As to quaternary structure, interacts with EGFR and ERBB2.

Its subcellular location is the cytoplasm. The protein resides in the cell membrane. It is found in the nucleus. Functionally, negative regulator of EGFR signaling in skin morphogenesis. Acts as a negative regulator for several EGFR family members, including ERBB2, ERBB3 and ERBB4. Inhibits EGFR catalytic activity by interfering with its dimerization. Inhibits autophosphorylation of EGFR, ERBB2 and ERBB4. Important for normal keratinocyte proliferation and differentiation. Plays a role in modulating the response to steroid hormones in the uterus. Required for normal response to progesterone in the uterus and for fertility. Mediates epithelial estrogen responses in the uterus by regulating ESR1 levels and activation. Important for regulation of endometrium cell proliferation. Important for normal prenatal and perinatal lung development. This chain is ERBB receptor feedback inhibitor 1 (Errfi1), found in Rattus norvegicus (Rat).